The following is a 182-amino-acid chain: uncharacterized protein (182 aa).

2 disordered regions span residues 17 to 53 (AVSQAQGRPGHPDAPPNIYEGGLGSPQPQCPSAQGSK) and 128 to 159 (DSLGSSASSSSMDPDKGALPQPSPSRLRPKRS). The span at 42–53 (PQPQCPSAQGSK) shows a compositional bias: polar residues. Over residues 129–138 (SLGSSASSSS) the composition is skewed to low complexity.

This is an uncharacterized protein from Homo sapiens (Human).